The sequence spans 446 residues: N-succinylarginine dihydrolase (446 aa).

Substrate-binding positions include 19 to 28 (AGLSFGNEAS), Asn110, and 137 to 138 (HR). Residue Glu174 is part of the active site. Arg213 is a substrate binding site. His249 is an active-site residue. The substrate site is built by Asp251 and Asn364. Residue Cys370 is the Nucleophile of the active site.

The protein belongs to the succinylarginine dihydrolase family. In terms of assembly, homodimer.

The enzyme catalyses N(2)-succinyl-L-arginine + 2 H2O + 2 H(+) = N(2)-succinyl-L-ornithine + 2 NH4(+) + CO2. It participates in amino-acid degradation; L-arginine degradation via AST pathway; L-glutamate and succinate from L-arginine: step 2/5. Its function is as follows. Catalyzes the hydrolysis of N(2)-succinylarginine into N(2)-succinylornithine, ammonia and CO(2). In Acinetobacter baylyi (strain ATCC 33305 / BD413 / ADP1), this protein is N-succinylarginine dihydrolase.